An 881-amino-acid polypeptide reads, in one-letter code: Valine--tRNA ligase (881 aa).

Residues 49–59 (PNVTGKLHLGH) carry the 'HIGH' region motif. A 'KMSKS' region motif is present at residues 526–530 (KMSKS). Lysine 529 is an ATP binding site. Residues 810–881 (LADLINLDEE…VRQRLADLEK (72 aa)) are a coiled coil.

This sequence belongs to the class-I aminoacyl-tRNA synthetase family. ValS type 1 subfamily. Monomer.

It is found in the cytoplasm. It carries out the reaction tRNA(Val) + L-valine + ATP = L-valyl-tRNA(Val) + AMP + diphosphate. Its function is as follows. Catalyzes the attachment of valine to tRNA(Val). As ValRS can inadvertently accommodate and process structurally similar amino acids such as threonine, to avoid such errors, it has a 'posttransfer' editing activity that hydrolyzes mischarged Thr-tRNA(Val) in a tRNA-dependent manner. The polypeptide is Valine--tRNA ligase (Bacillus thuringiensis subsp. konkukian (strain 97-27)).